We begin with the raw amino-acid sequence, 664 residues long: DNA ligase (664 aa).

NAD(+)-binding positions include 34–38 (DAEYD), 83–84 (SL), and Glu114. Lys116 functions as the N6-AMP-lysine intermediate in the catalytic mechanism. NAD(+) is bound by residues Arg137, Glu172, Lys288, and Lys312. Zn(2+) is bound by residues Cys406, Cys409, Cys424, and Cys429. One can recognise a BRCT domain in the interval 586–664 (VRDNRLEGLT…EEEFRQMVMS (79 aa)).

The protein belongs to the NAD-dependent DNA ligase family. LigA subfamily. Requires Mg(2+) as cofactor. Mn(2+) serves as cofactor.

The enzyme catalyses NAD(+) + (deoxyribonucleotide)n-3'-hydroxyl + 5'-phospho-(deoxyribonucleotide)m = (deoxyribonucleotide)n+m + AMP + beta-nicotinamide D-nucleotide.. Its function is as follows. DNA ligase that catalyzes the formation of phosphodiester linkages between 5'-phosphoryl and 3'-hydroxyl groups in double-stranded DNA using NAD as a coenzyme and as the energy source for the reaction. It is essential for DNA replication and repair of damaged DNA. This Carboxydothermus hydrogenoformans (strain ATCC BAA-161 / DSM 6008 / Z-2901) protein is DNA ligase.